A 1243-amino-acid polypeptide reads, in one-letter code: Protein MMS22-like (1243 aa).

This sequence belongs to the MMS22 family. MMS22L subfamily. Component of the MMS22L-TONSL complex, a complex at least composed of MMS22L and TONSL/NFKBIL2. Interacts with RAD51; interaction is direct. Degraded by the ubiquitin-proteasome system upon replication stress.

The protein localises to the nucleus. It is found in the chromosome. In terms of biological role, component of the MMS22L-TONSL complex, a complex that promotes homologous recombination-mediated repair of double-strand breaks (DSBs) at stalled or collapsed replication forks. The MMS22L-TONSL complex is required to maintain genome integrity during DNA replication. It mediates the assembly of RAD51 filaments on single-stranded DNA (ssDNA): the MMS22L-TONSL complex is recruited to DSBs following histone replacement by histone chaperones and eviction of the replication protein A complex (RPA/RP-A) from DSBs. Following recruitment to DSBs, the TONSL-MMS22L complex promotes recruitment of RAD51 filaments and subsequent homologous recombination. Within the complex, MMS22L acts by binding ssDNA. The chain is Protein MMS22-like from Homo sapiens (Human).